The chain runs to 106 residues: uncharacterized protein (106 aa).

An N-terminal signal peptide occupies residues 1–31; sequence MNNERLMLKGIFLGAAAGAALSLLHKPTRQA. Residues 57-89 adopt a coiled-coil conformation; that stretch reads VITKVDEAKKLARTLSKEVDFVNQQVKELKKTT.

This is an uncharacterized protein from Bacillus subtilis (strain 168).